A 187-amino-acid chain; its full sequence is RNA 2',3'-cyclic phosphodiesterase (187 aa).

The active-site Proton donor is the histidine 40. 2 consecutive short sequence motifs (HXTX) follow at residues 40-43 (HLTL) and 125-128 (HITI). Histidine 125 serves as the catalytic Proton acceptor.

The protein belongs to the 2H phosphoesterase superfamily. ThpR family.

It catalyses the reaction a 3'-end 2',3'-cyclophospho-ribonucleotide-RNA + H2O = a 3'-end 2'-phospho-ribonucleotide-RNA + H(+). Functionally, hydrolyzes RNA 2',3'-cyclic phosphodiester to an RNA 2'-phosphomonoester. This chain is RNA 2',3'-cyclic phosphodiesterase, found in Thermotoga maritima (strain ATCC 43589 / DSM 3109 / JCM 10099 / NBRC 100826 / MSB8).